An 838-amino-acid chain; its full sequence is Valine--tRNA ligase (838 aa).

A 'HIGH' region motif is present at residues 46 to 56 (PNLTGTLHIGH). The 'KMSKS' region signature appears at 514-518 (KMSKS). An ATP-binding site is contributed by K517. Residues 768 to 838 (VDNAANNLAH…HLIAKLTKAE (71 aa)) adopt a coiled-coil conformation.

The protein belongs to the class-I aminoacyl-tRNA synthetase family. ValS type 1 subfamily. As to quaternary structure, monomer.

The protein localises to the cytoplasm. The catalysed reaction is tRNA(Val) + L-valine + ATP = L-valyl-tRNA(Val) + AMP + diphosphate. Its function is as follows. Catalyzes the attachment of valine to tRNA(Val). As ValRS can inadvertently accommodate and process structurally similar amino acids such as threonine, to avoid such errors, it has a 'posttransfer' editing activity that hydrolyzes mischarged Thr-tRNA(Val) in a tRNA-dependent manner. This is Valine--tRNA ligase from Mycoplasma pneumoniae (strain ATCC 29342 / M129 / Subtype 1) (Mycoplasmoides pneumoniae).